A 170-amino-acid chain; its full sequence is ATP synthase subunit b (170 aa).

The helical transmembrane segment at 11-31 (GLNTGDIIFQLIAMLILLALL) threads the bilayer.

Belongs to the ATPase B chain family. As to quaternary structure, F-type ATPases have 2 components, F(1) - the catalytic core - and F(0) - the membrane proton channel. F(1) has five subunits: alpha(3), beta(3), gamma(1), delta(1), epsilon(1). F(0) has three main subunits: a(1), b(2) and c(10-14). The alpha and beta chains form an alternating ring which encloses part of the gamma chain. F(1) is attached to F(0) by a central stalk formed by the gamma and epsilon chains, while a peripheral stalk is formed by the delta and b chains.

The protein localises to the cell membrane. In terms of biological role, f(1)F(0) ATP synthase produces ATP from ADP in the presence of a proton or sodium gradient. F-type ATPases consist of two structural domains, F(1) containing the extramembraneous catalytic core and F(0) containing the membrane proton channel, linked together by a central stalk and a peripheral stalk. During catalysis, ATP synthesis in the catalytic domain of F(1) is coupled via a rotary mechanism of the central stalk subunits to proton translocation. Component of the F(0) channel, it forms part of the peripheral stalk, linking F(1) to F(0). This is ATP synthase subunit b from Bacillus pumilus (strain SAFR-032).